The chain runs to 4423 residues: Nonribosomal peptide synthetase 7 (4423 aa).

Residues 572 to 986 (NIYPCTSIQE…LISQDDKNRI (415 aa)) form a condensation 1 region. Residues 1007–1404 (ERIQKQPSAV…GRRDTQVKIR (398 aa)) form an adenylation 1 region. One can recognise a Carrier 1 domain in the interval 1533–1609 (LPLTETEQKL…DLARTIDERN (77 aa)). Ser1570 is subject to O-(pantetheine 4'-phosphoryl)serine. Residues 1657-2066 (EDVYPCTSLQ…QFLDETHHET (410 aa)) form a condensation 2 region. The segment at 2102–2499 (RDVAKEQPDS…YIGRMGSEVK (398 aa)) is adenylation 2. The region spanning 2642-2718 (VPQTRIGKKL…DCARILEADQ (77 aa)) is the Carrier 2 domain. Ser2679 carries the O-(pantetheine 4'-phosphoryl)serine modification. The interval 2764–3170 (EDVYPCTPMQ…AASASSDDQT (407 aa)) is condensation 3. Positions 3205–3609 (RSLETRPDSQ…GRGDSQIKIR (405 aa)) are adenylation 3. The region spanning 3731–3804 (TESEYITRTL…KMAVVAQHQT (74 aa)) is the Carrier 3 domain. Ser3765 carries the post-translational modification O-(pantetheine 4'-phosphoryl)serine. Residues 3875-4278 (TFVLDAEGDL…SQDEKLALLG (404 aa)) form a condensation 4 region. Residues 4288–4300 (KLTKLQRVNSPKE) are compositionally biased toward polar residues. Residues 4288–4312 (KLTKLQRVNSPKEQTLRKDKPTNGV) form a disordered region.

The protein belongs to the NRP synthetase family.

It participates in secondary metabolite biosynthesis. In terms of biological role, nonribosomal peptide synthetase; part of the gene cluster that mediates the biosynthesis of the lipopeptide fusaristatin A. Fusaristatin A consists of a polyketide chain linked to three amino acid residues glutamine (Gln), dehydroalanine (dehydro-Ala), and beta-aminoisobutyric acid. The biosynthesis starts with formation of a linear polyketide chain by the highly reducing polyketide synthase PKS6. The gene cluster does not contain an acyl-CoA ligase or an acyl-transferase, and it is therefore predicted that the polyketide is transferred directly to the nonribosomal peptide synthetase NRPS7. Modules 1-3 from NRPS7 incorporate dehydro-Ala, Gln, and beta-aminoisobutyric acid in the compound, which is released by cyclization. The beta-aminoisobutyric acid units are most likely not freely available to the NRPS, but can be synthesized from thymine, which requires a dehydrogenase, a monooxygenase, and an aminotransferase. The fusaristatin A cluster contains a cytochrome P450 monooxygenase (FGSG_08207) and an aminotransferase (FGSG_17085), which theoretically can perform two of the enzymatic steps. The enzymes may however also be involved in biosynthesis of dehydroalanine or modification of the polyketide. The dehydro-Ala residue can be a result of cyclization, where serine is dehydrated. The last gene of the cluster encodes a protein with an A/B barrel domain found in variable enzymes, which hampers functional prediction. The polypeptide is Nonribosomal peptide synthetase 7 (Gibberella zeae (strain ATCC MYA-4620 / CBS 123657 / FGSC 9075 / NRRL 31084 / PH-1) (Wheat head blight fungus)).